We begin with the raw amino-acid sequence, 461 residues long: Photosystem II CP43 reaction center protein (461 aa).

The propeptide occupies 1–2 (ME). An N-acetylthreonine modification is found at Thr-3. Thr-3 is modified (phosphothreonine). The next 5 membrane-spanning stretches (helical) occupy residues 57–81 (LFEV…PHIA), 122–143 (LIGP…KDKN), 166–188 (KAMY…RVIT), 243–263 (TPWP…LSYS), and 279–300 (WFNN…ASQS). Glu-355 is a binding site for [CaMn4O5] cluster. A helical membrane pass occupies residues 435–459 (RARAAAAGFEKGIDRFDEPVLSMRP).

Belongs to the PsbB/PsbC family. PsbC subfamily. PSII is composed of 1 copy each of membrane proteins PsbA, PsbB, PsbC, PsbD, PsbE, PsbF, PsbH, PsbI, PsbJ, PsbK, PsbL, PsbM, PsbT, PsbX, PsbY, PsbZ, Psb30/Ycf12, at least 3 peripheral proteins of the oxygen-evolving complex and a large number of cofactors. It forms dimeric complexes. It depends on Binds multiple chlorophylls and provides some of the ligands for the Ca-4Mn-5O cluster of the oxygen-evolving complex. It may also provide a ligand for a Cl- that is required for oxygen evolution. PSII binds additional chlorophylls, carotenoids and specific lipids. as a cofactor. Phosphorylated in vitro.

Its subcellular location is the plastid. It is found in the chloroplast thylakoid membrane. Its function is as follows. One of the components of the core complex of photosystem II (PSII). It binds chlorophyll and helps catalyze the primary light-induced photochemical processes of PSII. PSII is a light-driven water:plastoquinone oxidoreductase, using light energy to abstract electrons from H(2)O, generating O(2) and a proton gradient subsequently used for ATP formation. The polypeptide is Photosystem II CP43 reaction center protein (Chlamydomonas reinhardtii (Chlamydomonas smithii)).